The following is a 140-amino-acid chain: 3-hydroxyacyl-[acyl-carrier-protein] dehydratase FabZ (140 aa).

Residue H47 is part of the active site.

Belongs to the thioester dehydratase family. FabZ subfamily.

The protein resides in the cytoplasm. The catalysed reaction is a (3R)-hydroxyacyl-[ACP] = a (2E)-enoyl-[ACP] + H2O. Functionally, involved in unsaturated fatty acids biosynthesis. Catalyzes the dehydration of short chain beta-hydroxyacyl-ACPs and long chain saturated and unsaturated beta-hydroxyacyl-ACPs. The protein is 3-hydroxyacyl-[acyl-carrier-protein] dehydratase FabZ of Streptococcus suis (strain 98HAH33).